The primary structure comprises 223 residues: 7-cyano-7-deazaguanine synthase (223 aa).

15 to 25 contacts ATP; the sequence is FSGGQDSTTCL. Zn(2+) contacts are provided by Cys191, Cys200, Cys203, and Cys206.

Belongs to the QueC family. In terms of assembly, homodimer. Zn(2+) is required as a cofactor.

The enzyme catalyses 7-carboxy-7-deazaguanine + NH4(+) + ATP = 7-cyano-7-deazaguanine + ADP + phosphate + H2O + H(+). It functions in the pathway purine metabolism; 7-cyano-7-deazaguanine biosynthesis. Catalyzes the ATP-dependent conversion of 7-carboxy-7-deazaguanine (CDG) to 7-cyano-7-deazaguanine (preQ(0)). In Staphylococcus haemolyticus (strain JCSC1435), this protein is 7-cyano-7-deazaguanine synthase.